Consider the following 347-residue polypeptide: Ribosomal RNA small subunit methyltransferase C (347 aa).

This sequence belongs to the methyltransferase superfamily. RsmC family. As to quaternary structure, monomer.

The protein localises to the cytoplasm. The catalysed reaction is guanosine(1207) in 16S rRNA + S-adenosyl-L-methionine = N(2)-methylguanosine(1207) in 16S rRNA + S-adenosyl-L-homocysteine + H(+). Its function is as follows. Specifically methylates the guanine in position 1207 of 16S rRNA in the 30S particle. The protein is Ribosomal RNA small subunit methyltransferase C of Shewanella baltica (strain OS195).